The sequence spans 204 residues: Urease accessory protein UreG (204 aa).

11 to 18 (GPVGAGKT) provides a ligand contact to GTP.

It belongs to the SIMIBI class G3E GTPase family. UreG subfamily. In terms of assembly, homodimer. UreD, UreF and UreG form a complex that acts as a GTP-hydrolysis-dependent molecular chaperone, activating the urease apoprotein by helping to assemble the nickel containing metallocenter of UreC. The UreE protein probably delivers the nickel.

The protein localises to the cytoplasm. Its function is as follows. Facilitates the functional incorporation of the urease nickel metallocenter. This process requires GTP hydrolysis, probably effectuated by UreG. This chain is Urease accessory protein UreG, found in Staphylococcus aureus (strain Mu3 / ATCC 700698).